The following is a 100-amino-acid chain: Biogenesis of lysosome-related organelles complex 1 subunit CNL1 (100 aa).

Positions 25–46 (SDRVKSLELEATRLVQRQNELV) form a coiled coil.

Belongs to the BLOC1S4 family. In terms of assembly, component of the biogenesis of lysosome-related organelles complex-1 (BLOC-1).

It localises to the cytoplasm. In terms of biological role, component of the biogenesis of lysosome-related organelles complex-1 (BLOC-1), a complex that is involved in endosomal cargo sorting. The sequence is that of Biogenesis of lysosome-related organelles complex 1 subunit CNL1 (CLN1) from Candida glabrata (strain ATCC 2001 / BCRC 20586 / JCM 3761 / NBRC 0622 / NRRL Y-65 / CBS 138) (Yeast).